A 211-amino-acid chain; its full sequence is Protein-L-isoaspartate O-methyltransferase (211 aa).

Ser60 is an active-site residue.

It belongs to the methyltransferase superfamily. L-isoaspartyl/D-aspartyl protein methyltransferase family.

The protein resides in the cytoplasm. It carries out the reaction [protein]-L-isoaspartate + S-adenosyl-L-methionine = [protein]-L-isoaspartate alpha-methyl ester + S-adenosyl-L-homocysteine. Functionally, catalyzes the methyl esterification of L-isoaspartyl residues in peptides and proteins that result from spontaneous decomposition of normal L-aspartyl and L-asparaginyl residues. It plays a role in the repair and/or degradation of damaged proteins. The chain is Protein-L-isoaspartate O-methyltransferase from Hahella chejuensis (strain KCTC 2396).